A 163-amino-acid polypeptide reads, in one-letter code: Large ribosomal subunit protein uL10 (163 aa).

Belongs to the universal ribosomal protein uL10 family. In terms of assembly, part of the ribosomal stalk of the 50S ribosomal subunit. The N-terminus interacts with L11 and the large rRNA to form the base of the stalk. The C-terminus forms an elongated spine to which L12 dimers bind in a sequential fashion forming a multimeric L10(L12)X complex.

Forms part of the ribosomal stalk, playing a central role in the interaction of the ribosome with GTP-bound translation factors. This chain is Large ribosomal subunit protein uL10, found in Haemophilus ducreyi (strain 35000HP / ATCC 700724).